The following is a 256-amino-acid chain: (E)-benzylidenesuccinyl-CoA hydratase (256 aa).

Glutamate 110 functions as the Nucleophile in the catalytic mechanism. The active-site Proton acceptor is the glutamate 130.

This sequence belongs to the enoyl-CoA hydratase/isomerase family. Homotrimer.

It catalyses the reaction (2S)-[(R)-hydroxy(phenyl)methyl]succinyl-CoA = (E)-2-benzylidenesuccinyl-CoA + H2O. It participates in xenobiotic degradation; toluene degradation. In terms of biological role, involved in an anaerobic toluene degradation pathway. Catalyzes the hydration of (E)-2-benzylidenesuccinyl-CoA to the corresponding alcohol intermediate, 2-(alpha-hydroxybenzyl)succinyl-CoA. Also accepts the N-acetylcysteamine (NAC) thioester of (E)-benzylidenesuccinate. The polypeptide is (E)-benzylidenesuccinyl-CoA hydratase (Thauera aromatica).